We begin with the raw amino-acid sequence, 87 residues long: Phosphoribosyl-ATP pyrophosphatase (87 aa).

This sequence belongs to the PRA-PH family.

The protein localises to the cytoplasm. The enzyme catalyses 1-(5-phospho-beta-D-ribosyl)-ATP + H2O = 1-(5-phospho-beta-D-ribosyl)-5'-AMP + diphosphate + H(+). Its pathway is amino-acid biosynthesis; L-histidine biosynthesis; L-histidine from 5-phospho-alpha-D-ribose 1-diphosphate: step 2/9. The sequence is that of Phosphoribosyl-ATP pyrophosphatase from Corynebacterium diphtheriae (strain ATCC 700971 / NCTC 13129 / Biotype gravis).